Consider the following 210-residue polypeptide: ATP-dependent Clp protease proteolytic subunit (210 aa).

Ser107 acts as the Nucleophile in catalysis. The active site involves His132.

The protein belongs to the peptidase S14 family. As to quaternary structure, fourteen ClpP subunits assemble into 2 heptameric rings which stack back to back to give a disk-like structure with a central cavity, resembling the structure of eukaryotic proteasomes.

It localises to the cytoplasm. The catalysed reaction is Hydrolysis of proteins to small peptides in the presence of ATP and magnesium. alpha-casein is the usual test substrate. In the absence of ATP, only oligopeptides shorter than five residues are hydrolyzed (such as succinyl-Leu-Tyr-|-NHMec, and Leu-Tyr-Leu-|-Tyr-Trp, in which cleavage of the -Tyr-|-Leu- and -Tyr-|-Trp bonds also occurs).. Its function is as follows. Cleaves peptides in various proteins in a process that requires ATP hydrolysis. Has a chymotrypsin-like activity. Plays a major role in the degradation of misfolded proteins. In Cereibacter sphaeroides (strain ATCC 17025 / ATH 2.4.3) (Rhodobacter sphaeroides), this protein is ATP-dependent Clp protease proteolytic subunit.